A 296-amino-acid polypeptide reads, in one-letter code: GTPase Era (296 aa).

Positions 3–170 (KSGFVTIIGR…IELMVKHLNE (168 aa)) constitute an Era-type G domain. The tract at residues 11-18 (GRPNVGKS) is G1. 11-18 (GRPNVGKS) contacts GTP. The tract at residues 37-41 (QTTRN) is G2. Residues 58-61 (DTPG) form a G3 region. GTP is bound by residues 58–62 (DTPGM) and 120–123 (NKID). The interval 120–123 (NKID) is G4. The interval 149-151 (ISA) is G5. Positions 201–277 (LSQEVPHGIA…NMKIWVKVKK (77 aa)) constitute a KH type-2 domain.

The protein belongs to the TRAFAC class TrmE-Era-EngA-EngB-Septin-like GTPase superfamily. Era GTPase family. Monomer.

The protein localises to the cytoplasm. The protein resides in the cell membrane. In terms of biological role, an essential GTPase that binds both GDP and GTP, with rapid nucleotide exchange. Plays a role in 16S rRNA processing and 30S ribosomal subunit biogenesis and possibly also in cell cycle regulation and energy metabolism. In Clostridium acetobutylicum (strain ATCC 824 / DSM 792 / JCM 1419 / IAM 19013 / LMG 5710 / NBRC 13948 / NRRL B-527 / VKM B-1787 / 2291 / W), this protein is GTPase Era.